Consider the following 484-residue polypeptide: mRNA decay activator protein ZFP36L2 (484 aa).

Residues Ser57 and Ser127 each carry the phosphoserine modification. The segment at 100 to 152 is disordered; the sequence is YGQLKEPSGGSGTALVTKESKFRDRSFSENGERSQHLLHLQQQQKGGSGSQIN. Over residues 117 to 134 the composition is skewed to basic and acidic residues; the sequence is KESKFRDRSFSENGERSQ. The RNA-binding motif lies at 155-160; it reads RYKTEL. 2 C3H1-type zinc fingers span residues 155–183 and 193–221; these read RYKTELCRPFEESGTCKYGEKCQFAHGFH and KYKTELCRTFHTIGFCPYGPRCHFIHNAD. Residues 172–213 form an RNA-binding region; it reads YGEKCQFAHGFHELRSLTRHPKYKTELCRTFHTIGFCPYGPR. Disordered regions lie at residues 261–304 and 395–484; these read SLSF…SCSS and QQGL…ISDD. Residues 401–418 show a composition bias toward pro residues; sequence PAPPPAQPPAAPAPPSPP. The span at 449–468 shows a compositional bias: low complexity; it reads YLSGSLSSGSLSGSESPSLD. A phosphoserine; by RPS6KA1 mark is found at Ser480 and Ser482.

Associates with the cytoplasmic CCR4-NOT deadenylase to trigger ARE-containing mRNA deadenylation and decay processes. Interacts with CNOT7; this interaction is inhibited in response to phorbol 12-myristate 13-acetate (PMA) treatment in a p38 MAPK-dependent manner. Interacts with CNOT6L. In terms of processing, phosphorylated by RPS6KA1 at Ser-480 and Ser-482 upon phorbol 12-myristate 13-acetate (PMA) treatment; this phosphorylation results in dissociation of the CCR4-NOT-deadenylase complex and induces p38 MAPK-mediated stabilization of the low-density lipoprotein (LDL) receptor (LDLR) mRNA. Phosphorylation occurs during early preadipocyte differentiation. Expressed in preadipocytes and adipocytes (at protein level). Expressed at highest level in lymphoid tissues such as thymus, spleen, lung, uterus, ovary, small and large intestine, mammary gland, fat and bone marrow. Expressed at intermediate level in kidney, heart, adrenal, eye and fetal liver. Weakly expressed in brain, skeletal muscle and liver. Expressed through B lymphocyte development. Expressed in superior cervical ganglion (SCG) and dorsal root ganglion (DRG). Expressed in embryonic stem cells (ESCs). Expressed in oocytes.

The protein localises to the nucleus. The protein resides in the cytoplasm. Zinc-finger RNA-binding protein that destabilizes several cytoplasmic AU-rich element (ARE)-containing mRNA transcripts by promoting their poly(A) tail removal or deadenylation, and hence provide a mechanism for attenuating protein synthesis. Acts as a 3'-untranslated region (UTR) ARE mRNA-binding adapter protein to communicate signaling events to the mRNA decay machinery. Functions by recruiting the CCR4-NOT deadenylase complex and probably other components of the cytoplasmic RNA decay machinery to the bound ARE-containing mRNAs, and hence promotes ARE-mediated mRNA deadenylation and decay processes. Binds to 3'-UTR ARE of numerous mRNAs. Promotes ARE-containing mRNA decay of the low-density lipoprotein (LDL) receptor (LDLR) mRNA in response to phorbol 12-myristate 13-acetate (PMA) treatment in a p38 MAPK-dependent manner. Positively regulates early adipogenesis by promoting ARE-mediated mRNA decay of immediate early genes (IEGs). Plays a role in mature peripheral neuron integrity by promoting ARE-containing mRNA decay of the transcriptional repressor REST mRNA. Plays a role in ovulation and oocyte meiotic maturation by promoting ARE-mediated mRNA decay of the luteinizing hormone receptor LHCGR mRNA. Acts as a negative regulator of erythroid cell differentiation: promotes glucocorticoid-induced self-renewal of erythroid cells by binding mRNAs that are induced or highly expressed during terminal erythroid differentiation and promotes their degradation, preventing erythroid cell differentiation. In association with ZFP36L1 maintains quiescence on developing B lymphocytes by promoting ARE-mediated decay of several mRNAs encoding cell cycle regulators that help B cells progress through the cell cycle, and hence ensuring accurate variable-diversity-joining (VDJ) recombination process and functional immune cell formation. Together with ZFP36L1 is also necessary for thymocyte development and prevention of T-cell acute lymphoblastic leukemia (T-ALL) transformation by promoting ARE-mediated mRNA decay of the oncogenic transcription factor NOTCH1 mRNA. This is mRNA decay activator protein ZFP36L2 from Mus musculus (Mouse).